A 95-amino-acid polypeptide reads, in one-letter code: Large ribosomal subunit protein uL23 (95 aa).

Belongs to the universal ribosomal protein uL23 family. Part of the 50S ribosomal subunit. Contacts protein L29, and trigger factor when it is bound to the ribosome.

In terms of biological role, one of the early assembly proteins it binds 23S rRNA. One of the proteins that surrounds the polypeptide exit tunnel on the outside of the ribosome. Forms the main docking site for trigger factor binding to the ribosome. The polypeptide is Large ribosomal subunit protein uL23 (Heliobacterium modesticaldum (strain ATCC 51547 / Ice1)).